Reading from the N-terminus, the 327-residue chain is Olfactory receptor 9G4 (327 aa).

The Extracellular portion of the chain corresponds to 1–43 (MIFPSHDSQAFTSVDMEVGNCTILTEFILLGFSADSQWQPILF). A glycan (N-linked (GlcNAc...) asparagine) is linked at Asn-20. Residues 44–64 (GVFLMLYLITLSGNMTLVILI) traverse the membrane as a helical segment. The Cytoplasmic portion of the chain corresponds to 65 to 71 (RTDSHLH). The helical transmembrane segment at 72 to 92 (TPMYFFIGNLSFLDFWYTSVY) threads the bilayer. At 93–113 (TPKILASCVSEDKRISLAGCG) the chain is on the extracellular side. Cys-112 and Cys-194 are joined by a disulfide. A helical transmembrane segment spans residues 114–134 (AQLFFSCVVAYTECYLLAAMA). The Cytoplasmic portion of the chain corresponds to 135–152 (YDRHAAICNPLLYSGTMS). The chain crosses the membrane as a helical span at residues 153–173 (TALCTGLVAGSYIGGFLNAIA). At 174 to 212 (HTANTFRLHFCGKNIIDHFFCDAPPLVKMSCTNTRVYEK) the chain is on the extracellular side. A helical transmembrane segment spans residues 213–233 (VLLGVVGFTVLSSILAILISY). Over 234–252 (VNILLAILRIHSASGRHKA) the chain is Cytoplasmic. The helical transmembrane segment at 253–273 (FSTCASHLISVMLFYGSLLFM) threads the bilayer. Topologically, residues 274 to 286 (YSRPSSTYSLERD) are extracellular. A helical membrane pass occupies residues 287–307 (KVAALFYTVINPLLNPLIYSL). The Cytoplasmic portion of the chain corresponds to 308-327 (RNKDIKEAFRKATQTIQPQT).

Belongs to the G-protein coupled receptor 1 family.

It is found in the cell membrane. Functionally, odorant receptor. In Homo sapiens (Human), this protein is Olfactory receptor 9G4 (OR9G4).